Reading from the N-terminus, the 576-residue chain is Alpha-bisabolol synthase (576 aa).

Arg286, Asp323, Asp327, Arg466, and Asn469 together coordinate (2E,6E)-farnesyl diphosphate. The Mg(2+) site is built by Asp323 and Asp327. Residues 323-327 (DDVYD) carry the DDXXD motif motif. Residues Asn469, Thr473, and Glu477 each contribute to the Mg(2+) site.

It belongs to the terpene synthase family. Tpsb subfamily. Mg(2+) serves as cofactor. Requires Mn(2+) as cofactor.

Produces a mixture of beta-bisabolene and alpha-bisabolol, along with traces of alpha-bisabolene and farnesene isomers from (2E,6E)-farnesyl diphosphate in fragrance biosynthesis. This is Alpha-bisabolol synthase from Santalum spicatum (Australian sandalwood).